Consider the following 352-residue polypeptide: UPF0324 membrane protein blr3189 (352 aa).

Transmembrane regions (helical) follow at residues 21–43 (IAALIPGILLCIAVAGVSALLER), 53–71 (YVEALVMAILLGMALRSFW), 88–110 (LLEVAVMLLGASISFAAIAASGI), 114–136 (ASIAAVVVIALCVSFGLSRLLGL), 143–165 (LIACGNSICGNSAIAAVAPIIGA), 175–197 (SFTAILGVMMVLGLPLLIPLLQL), 204–226 (ILAGLTVYAVPQVLAATVPAGLV), 236–253 (LMRVLMLGPVVVGLSLVA), 265–284 (VGFFRLVPWFILGFLALATL), 294–316 (VVGPVTKITSFLTVVSMAALGLG), and 329–351 (VTAAVTLSLMLLLGISIALVHWF).

The protein belongs to the UPF0324 family.

It is found in the cell membrane. The sequence is that of UPF0324 membrane protein blr3189 from Bradyrhizobium diazoefficiens (strain JCM 10833 / BCRC 13528 / IAM 13628 / NBRC 14792 / USDA 110).